The sequence spans 475 residues: 3-isopropylmalate dehydratase large subunit (475 aa).

[4Fe-4S] cluster contacts are provided by Cys349, Cys409, and Cys412.

Belongs to the aconitase/IPM isomerase family. LeuC type 1 subfamily. Heterodimer of LeuC and LeuD. It depends on [4Fe-4S] cluster as a cofactor.

The enzyme catalyses (2R,3S)-3-isopropylmalate = (2S)-2-isopropylmalate. It functions in the pathway amino-acid biosynthesis; L-leucine biosynthesis; L-leucine from 3-methyl-2-oxobutanoate: step 2/4. Catalyzes the isomerization between 2-isopropylmalate and 3-isopropylmalate, via the formation of 2-isopropylmaleate. The sequence is that of 3-isopropylmalate dehydratase large subunit from Cereibacter sphaeroides (strain ATCC 17029 / ATH 2.4.9) (Rhodobacter sphaeroides).